The primary structure comprises 143 residues: Large ribosomal subunit protein uL13 (143 aa).

This sequence belongs to the universal ribosomal protein uL13 family. Part of the 50S ribosomal subunit.

In terms of biological role, this protein is one of the early assembly proteins of the 50S ribosomal subunit, although it is not seen to bind rRNA by itself. It is important during the early stages of 50S assembly. In Prochlorococcus marinus (strain MIT 9301), this protein is Large ribosomal subunit protein uL13.